The sequence spans 461 residues: L-serine dehydratase (461 aa).

Belongs to the iron-sulfur dependent L-serine dehydratase family. [4Fe-4S] cluster serves as cofactor.

It carries out the reaction L-serine = pyruvate + NH4(+). It participates in carbohydrate biosynthesis; gluconeogenesis. This chain is L-serine dehydratase (sdaA), found in Mycobacterium bovis (strain ATCC BAA-935 / AF2122/97).